The primary structure comprises 194 residues: Imidazoleglycerol-phosphate dehydratase (194 aa).

This sequence belongs to the imidazoleglycerol-phosphate dehydratase family.

The protein localises to the cytoplasm. The catalysed reaction is D-erythro-1-(imidazol-4-yl)glycerol 3-phosphate = 3-(imidazol-4-yl)-2-oxopropyl phosphate + H2O. It functions in the pathway amino-acid biosynthesis; L-histidine biosynthesis; L-histidine from 5-phospho-alpha-D-ribose 1-diphosphate: step 6/9. This Lacticaseibacillus paracasei (strain ATCC 334 / BCRC 17002 / CCUG 31169 / CIP 107868 / KCTC 3260 / NRRL B-441) (Lactobacillus paracasei) protein is Imidazoleglycerol-phosphate dehydratase.